A 692-amino-acid chain; its full sequence is Translation initiation factor IF-2 (692 aa).

The interval 51 to 114 (KAKPENAKKG…KPAETPGKIT (64 aa)) is disordered. Low complexity predominate over residues 59–84 (KGQNQKQSNNQQQNRQKQNQKNQSKP). Over residues 85–94 (NKNKKQKGPK) the composition is skewed to basic residues. The region spanning 193-362 (ERPAVVTIMG…LLVSEVEELK (170 aa)) is the tr-type G domain. Residues 202-209 (GHVDHGKT) are G1. Residue 202 to 209 (GHVDHGKT) coordinates GTP. Residues 227–231 (GITQH) are G2. The segment at 248-251 (DTPG) is G3. Residues 248 to 252 (DTPGH) and 302 to 305 (NKMD) each bind GTP. The segment at 302–305 (NKMD) is G4. Residues 338–340 (SAI) form a G5 region.

Belongs to the TRAFAC class translation factor GTPase superfamily. Classic translation factor GTPase family. IF-2 subfamily.

It localises to the cytoplasm. In terms of biological role, one of the essential components for the initiation of protein synthesis. Protects formylmethionyl-tRNA from spontaneous hydrolysis and promotes its binding to the 30S ribosomal subunits. Also involved in the hydrolysis of GTP during the formation of the 70S ribosomal complex. This is Translation initiation factor IF-2 from Oceanobacillus iheyensis (strain DSM 14371 / CIP 107618 / JCM 11309 / KCTC 3954 / HTE831).